The primary structure comprises 280 residues: Phosphonates import ATP-binding protein PhnC 1 (280 aa).

The ABC transporter domain maps to 3–247; it reads FRLDAASVSY…LLRELYASES (245 aa). 36–43 contacts ATP; the sequence is GPSGAGKT.

The protein belongs to the ABC transporter superfamily. Phosphonates importer (TC 3.A.1.9.1) family. In terms of assembly, the complex is composed of two ATP-binding proteins (PhnC), two transmembrane proteins (PhnE) and a solute-binding protein (PhnD).

The protein localises to the cell inner membrane. It carries out the reaction phosphonate(out) + ATP + H2O = phosphonate(in) + ADP + phosphate + H(+). In terms of biological role, part of the ABC transporter complex PhnCDE involved in phosphonates import. Responsible for energy coupling to the transport system. This chain is Phosphonates import ATP-binding protein PhnC 1, found in Cupriavidus necator (strain ATCC 17699 / DSM 428 / KCTC 22496 / NCIMB 10442 / H16 / Stanier 337) (Ralstonia eutropha).